Consider the following 346-residue polypeptide: Transcription termination factor 4, mitochondrial (346 aa).

Residues 1 to 42 constitute a mitochondrion transit peptide; sequence MASLGRQVPEWHRLLALSWACLVRQTPHLREQKQMSPSLSCK. 5 MTERF repeats span residues 142-172, 177-204, 209-239, 245-270, and 290-318; these read FNAL…LGLG, KRVL…LREK, AQHI…YAYF, HLDI…YLER, and LRNI…VFKK. Residues 310–327 are dimerization with NSUN4; it reads VEEFQVFKKLLDQEEEEE. The segment at 321–346 is disordered; that stretch reads DQEEEEESESHASEEEEEEEEEEELL. The segment covering 322–346 has biased composition (acidic residues); it reads QEEEEESESHASEEEEEEEEEEELL.

Belongs to the mTERF family. As to quaternary structure, heterodimer with NSUN4; this interaction may be required for NSUN4 recruitment to the mitochondrial large ribosomal subunit. Widely expressed, with highest levels in liver, followed by testis, kidney and brain.

It localises to the mitochondrion. Functionally, regulator of mitochondrial ribosome biogenesis and translation. Binds to mitochondrial ribosomal RNAs 16S, 12S and 7S. Targets NSUN4 RNA methyltransferase to the mitochondrial large ribosomal subunit. This is Transcription termination factor 4, mitochondrial (Mterf4) from Mus musculus (Mouse).